The primary structure comprises 284 residues: Diaminopimelate epimerase (284 aa).

N13 and N66 together coordinate substrate. The active-site Proton donor is C75. Residues 76-77 (GN), N166, N199, and 217-218 (ER) each bind substrate. Catalysis depends on C226, which acts as the Proton acceptor. 227–228 (GT) is a binding site for substrate.

The protein belongs to the diaminopimelate epimerase family. As to quaternary structure, homodimer.

The protein resides in the cytoplasm. It carries out the reaction (2S,6S)-2,6-diaminopimelate = meso-2,6-diaminopimelate. The protein operates within amino-acid biosynthesis; L-lysine biosynthesis via DAP pathway; DL-2,6-diaminopimelate from LL-2,6-diaminopimelate: step 1/1. Catalyzes the stereoinversion of LL-2,6-diaminopimelate (L,L-DAP) to meso-diaminopimelate (meso-DAP), a precursor of L-lysine and an essential component of the bacterial peptidoglycan. The sequence is that of Diaminopimelate epimerase from Halothermothrix orenii (strain H 168 / OCM 544 / DSM 9562).